The following is a 465-amino-acid chain: Cysteine--tRNA ligase (465 aa).

Cys28 serves as a coordination point for Zn(2+). The short motif at 30 to 40 is the 'HIGH' region element; sequence MTVYDYCHLGH. Zn(2+) is bound by residues Cys209, His234, and Glu238. The short motif at 266–270 is the 'KMSKS' region element; the sequence is KMSKS. Lys269 is a binding site for ATP.

This sequence belongs to the class-I aminoacyl-tRNA synthetase family. In terms of assembly, monomer. The cofactor is Zn(2+).

It localises to the cytoplasm. It catalyses the reaction tRNA(Cys) + L-cysteine + ATP = L-cysteinyl-tRNA(Cys) + AMP + diphosphate. This chain is Cysteine--tRNA ligase, found in Nitrosomonas europaea (strain ATCC 19718 / CIP 103999 / KCTC 2705 / NBRC 14298).